Consider the following 215-residue polypeptide: Deoxyribose-phosphate aldolase (215 aa).

Asp90 (proton donor/acceptor) is an active-site residue. Residue Lys152 is the Schiff-base intermediate with acetaldehyde of the active site. Residue Lys181 is the Proton donor/acceptor of the active site.

This sequence belongs to the DeoC/FbaB aldolase family. DeoC type 1 subfamily.

The protein resides in the cytoplasm. The enzyme catalyses 2-deoxy-D-ribose 5-phosphate = D-glyceraldehyde 3-phosphate + acetaldehyde. Its pathway is carbohydrate degradation; 2-deoxy-D-ribose 1-phosphate degradation; D-glyceraldehyde 3-phosphate and acetaldehyde from 2-deoxy-alpha-D-ribose 1-phosphate: step 2/2. In terms of biological role, catalyzes a reversible aldol reaction between acetaldehyde and D-glyceraldehyde 3-phosphate to generate 2-deoxy-D-ribose 5-phosphate. This chain is Deoxyribose-phosphate aldolase, found in Ureaplasma parvum serovar 3 (strain ATCC 27815 / 27 / NCTC 11736).